We begin with the raw amino-acid sequence, 99 residues long: Phosphoribosyl-ATP pyrophosphatase (99 aa).

It belongs to the PRA-PH family.

It localises to the cytoplasm. The enzyme catalyses 1-(5-phospho-beta-D-ribosyl)-ATP + H2O = 1-(5-phospho-beta-D-ribosyl)-5'-AMP + diphosphate + H(+). It participates in amino-acid biosynthesis; L-histidine biosynthesis; L-histidine from 5-phospho-alpha-D-ribose 1-diphosphate: step 2/9. This is Phosphoribosyl-ATP pyrophosphatase from Methanococcoides burtonii (strain DSM 6242 / NBRC 107633 / OCM 468 / ACE-M).